The chain runs to 213 residues: Peptidyl-tRNA hydrolase (213 aa).

Y26 contributes to the tRNA binding site. The Proton acceptor role is filled by H31. Residues Y78, N80, and N126 each contribute to the tRNA site.

Belongs to the PTH family. Monomer.

It is found in the cytoplasm. It catalyses the reaction an N-acyl-L-alpha-aminoacyl-tRNA + H2O = an N-acyl-L-amino acid + a tRNA + H(+). Hydrolyzes ribosome-free peptidyl-tRNAs (with 1 or more amino acids incorporated), which drop off the ribosome during protein synthesis, or as a result of ribosome stalling. In terms of biological role, catalyzes the release of premature peptidyl moieties from peptidyl-tRNA molecules trapped in stalled 50S ribosomal subunits, and thus maintains levels of free tRNAs and 50S ribosomes. The protein is Peptidyl-tRNA hydrolase of Trichormus variabilis (strain ATCC 29413 / PCC 7937) (Anabaena variabilis).